The sequence spans 487 residues: Glutamyl-tRNA(Gln) amidotransferase subunit A (487 aa).

Residues K80 and S155 each act as charge relay system in the active site. S179 functions as the Acyl-ester intermediate in the catalytic mechanism.

It belongs to the amidase family. GatA subfamily. Heterotrimer of A, B and C subunits.

The enzyme catalyses L-glutamyl-tRNA(Gln) + L-glutamine + ATP + H2O = L-glutaminyl-tRNA(Gln) + L-glutamate + ADP + phosphate + H(+). Its function is as follows. Allows the formation of correctly charged Gln-tRNA(Gln) through the transamidation of misacylated Glu-tRNA(Gln) in organisms which lack glutaminyl-tRNA synthetase. The reaction takes place in the presence of glutamine and ATP through an activated gamma-phospho-Glu-tRNA(Gln). The chain is Glutamyl-tRNA(Gln) amidotransferase subunit A from Chloroflexus aurantiacus (strain ATCC 29366 / DSM 635 / J-10-fl).